The primary structure comprises 473 residues: Glycogen synthase (473 aa).

K15 is an ADP-alpha-D-glucose binding site.

Belongs to the glycosyltransferase 1 family. Bacterial/plant glycogen synthase subfamily.

The enzyme catalyses [(1-&gt;4)-alpha-D-glucosyl](n) + ADP-alpha-D-glucose = [(1-&gt;4)-alpha-D-glucosyl](n+1) + ADP + H(+). The protein operates within glycan biosynthesis; glycogen biosynthesis. Functionally, synthesizes alpha-1,4-glucan chains using ADP-glucose. In Flavobacterium johnsoniae (strain ATCC 17061 / DSM 2064 / JCM 8514 / BCRC 14874 / CCUG 350202 / NBRC 14942 / NCIMB 11054 / UW101) (Cytophaga johnsonae), this protein is Glycogen synthase.